Consider the following 289-residue polypeptide: ATP phosphoribosyltransferase (289 aa).

This sequence belongs to the ATP phosphoribosyltransferase family. Long subfamily. The cofactor is Mg(2+).

Its subcellular location is the cytoplasm. The catalysed reaction is 1-(5-phospho-beta-D-ribosyl)-ATP + diphosphate = 5-phospho-alpha-D-ribose 1-diphosphate + ATP. The protein operates within amino-acid biosynthesis; L-histidine biosynthesis; L-histidine from 5-phospho-alpha-D-ribose 1-diphosphate: step 1/9. With respect to regulation, feedback inhibited by histidine. In terms of biological role, catalyzes the condensation of ATP and 5-phosphoribose 1-diphosphate to form N'-(5'-phosphoribosyl)-ATP (PR-ATP). Has a crucial role in the pathway because the rate of histidine biosynthesis seems to be controlled primarily by regulation of HisG enzymatic activity. The sequence is that of ATP phosphoribosyltransferase from Pelotomaculum thermopropionicum (strain DSM 13744 / JCM 10971 / SI).